The primary structure comprises 191 residues: Large ribosomal subunit protein uL5 (191 aa).

It belongs to the universal ribosomal protein uL5 family. As to quaternary structure, part of the 50S ribosomal subunit; part of the 5S rRNA/L5/L18/L25 subcomplex. Contacts the 5S rRNA and the P site tRNA. Forms a bridge to the 30S subunit in the 70S ribosome.

This is one of the proteins that bind and probably mediate the attachment of the 5S RNA into the large ribosomal subunit, where it forms part of the central protuberance. In the 70S ribosome it contacts protein S13 of the 30S subunit (bridge B1b), connecting the 2 subunits; this bridge is implicated in subunit movement. Contacts the P site tRNA; the 5S rRNA and some of its associated proteins might help stabilize positioning of ribosome-bound tRNAs. This chain is Large ribosomal subunit protein uL5, found in Salinibacter ruber (strain DSM 13855 / M31).